A 1278-amino-acid polypeptide reads, in one-letter code: Dynactin subunit 1 (1278 aa).

Residues 1–25 (MAQSKRHVYSRTPSGSRMSAEASAR) form a disordered region. Positions 48-90 (GATLFATGKWVGVILDEAKGKNDGTVQGRKYFTCDEGHGIFVR) constitute a CAP-Gly domain. Residues 100 to 223 (GADTTSPETP…SKEEEGLRAQ (124 aa)) form a disordered region. Polar residues predominate over residues 102–114 (DTTSPETPDSSAS). At threonine 108 the chain carries Phosphothreonine. Residues 129 to 152 (SKLRGLKPKKAPTARKTTTRRPKP) are compositionally biased toward basic residues. Phosphothreonine; by SLK occurs at positions 145, 146, and 147. Positions 161-184 (AGASSSLGPSGSASAGELSSSEPS) are enriched in low complexity. Serine 179 is modified (phosphoserine; by PLK1). Phosphoserine; by CDK1 is present on serine 212. Coiled coils occupy residues 213-547 (PSKE…RQQQ), 943-1049 (LKLE…EGLR), and 1182-1211 (SAQL…KETV). The segment covering 214–223 (SKEEEGLRAQ) has biased composition (basic and acidic residues). An interaction with HPS6 region spans residues 911-1278 (EYDAERPPSK…LHQLHSRLIS (368 aa)).

This sequence belongs to the dynactin 150 kDa subunit family. In terms of assembly, monomer and homodimer. Subunit of dynactin, a multiprotein complex part of a tripartite complex with dynein and a adapter, such as BICDL1, BICD2 or HOOK3. The dynactin complex is built around ACTR1A/ACTB filament and consists of an actin-related filament composed of a shoulder domain, a pointed end and a barbed end. Its length is defined by its flexible shoulder domain. The soulder is composed of 2 DCTN1 subunits, 4 DCTN2 and 2 DCTN3. DCTN1/p150(glued) binds directly to microtubules and to cytoplasmic dynein. The 4 DCNT2 (via N-terminus) bind the ACTR1A filament and act as molecular rulers to determine the length. The pointed end is important for binding dynein-dynactin cargo adapters. Consists of 4 subunits: ACTR10, DCNT4, DCTN5 and DCTN6. The barbed end is composed of a CAPZA1:CAPZB heterodimers, which binds ACTR1A/ACTB filament and dynactin and stabilizes dynactin. Interacts with the C-terminus of MAPRE1, MAPRE2 and MAPRE3. Interacts (via C-terminus) with SNX6. Interacts with CLN3, DYNAP, ECPAS and FBXL5. Interacts with MISP; this interaction regulates its distribution at the cell cortex. Interacts with CEP131. Interacts with CEP126. Interacts with CLIP1. Interacts with dynein intermediate chain and dynein heavy chain. Interacts with PLK1 (via POLO-box domain). Interacts with TBCB. Binds preferentially to tyrosinated microtubules than to detyrosinated microtubules. Interacts with PARD6A. Interacts with HPS6. Interacts with KIF3A. Interacts with BICD2. Interacts with DST (isoform 9). Interacts with DST (isoform 1). Identified in a complex with MREG and RILP. Interacts with BCCIP (isoform 2/alpha). Interacts with DCDC1. Interacts with AKNA. Interacts with DYNC1I2. Interacts with RUFY3 and RUFY4. Ubiquitinated by a SCF complex containing FBXL5, leading to its degradation by the proteasome. In terms of processing, phosphorylation by SLK at Thr-145, Thr-146 and Thr-147 targets DCTN1 to the centrosome. It is uncertain if SLK phosphorylates all three threonines or one or two of them. PLK1-mediated phosphorylation at Ser-179 is essential for its localization in the nuclear envelope, promotes its dissociation from microtubules during early mitosis and positively regulates nuclear envelope breakdown during prophase. Brain.

It localises to the cytoplasm. It is found in the cytoskeleton. Its subcellular location is the microtubule organizing center. The protein localises to the centrosome. The protein resides in the centriole. It localises to the spindle. It is found in the nucleus envelope. Its subcellular location is the cell cortex. Functionally, part of the dynactin complex that activates the molecular motor dynein for ultra-processive transport along microtubules. Plays a key role in dynein-mediated retrograde transport of vesicles and organelles along microtubules by recruiting and tethering dynein to microtubules. Binds to both dynein and microtubules providing a link between specific cargos, microtubules and dynein. Essential for targeting dynein to microtubule plus ends, recruiting dynein to membranous cargos and enhancing dynein processivity (the ability to move along a microtubule for a long distance without falling off the track). Can also act as a brake to slow the dynein motor during motility along the microtubule. Can regulate microtubule stability by promoting microtubule formation, nucleation and polymerization and by inhibiting microtubule catastrophe in neurons. Inhibits microtubule catastrophe by binding both to microtubules and to tubulin, leading to enhanced microtubule stability along the axon. Plays a role in metaphase spindle orientation. Plays a role in centriole cohesion and subdistal appendage organization and function. Its recruitment to the centriole in a KIF3A-dependent manner is essential for the maintenance of centriole cohesion and the formation of subdistal appendage. Also required for microtubule anchoring at the mother centriole. Plays a role in primary cilia formation. The chain is Dynactin subunit 1 from Homo sapiens (Human).